The chain runs to 162 residues: tRNA (cytidine(34)-2'-O)-methyltransferase (162 aa).

Residues Leu83, Gly105, Ile127, and Ser135 each coordinate S-adenosyl-L-methionine.

Belongs to the class IV-like SAM-binding methyltransferase superfamily. RNA methyltransferase TrmH family. TrmL subfamily. In terms of assembly, homodimer.

It localises to the cytoplasm. It catalyses the reaction cytidine(34) in tRNA + S-adenosyl-L-methionine = 2'-O-methylcytidine(34) in tRNA + S-adenosyl-L-homocysteine + H(+). The enzyme catalyses 5-carboxymethylaminomethyluridine(34) in tRNA(Leu) + S-adenosyl-L-methionine = 5-carboxymethylaminomethyl-2'-O-methyluridine(34) in tRNA(Leu) + S-adenosyl-L-homocysteine + H(+). Its function is as follows. Methylates the ribose at the nucleotide 34 wobble position in the two leucyl isoacceptors tRNA(Leu)(CmAA) and tRNA(Leu)(cmnm5UmAA). Catalyzes the methyl transfer from S-adenosyl-L-methionine to the 2'-OH of the wobble nucleotide. The chain is tRNA (cytidine(34)-2'-O)-methyltransferase from Photorhabdus asymbiotica subsp. asymbiotica (strain ATCC 43949 / 3105-77) (Xenorhabdus luminescens (strain 2)).